Reading from the N-terminus, the 292-residue chain is Protein LRATD1 (292 aa).

Position 38 is a phosphoserine (Ser-38). One can recognise an LRAT domain in the interval Pro-133–Ala-228.

This sequence belongs to the LRATD family.

Its subcellular location is the cytoplasm. In terms of biological role, may play a role in cell morphology and motility. The protein is Protein LRATD1 of Mus musculus (Mouse).